The chain runs to 88 residues: MAVSGLRLTIVWGLLVLILTCQADDKPEGKPDEQPHDSGKNSEPAFPKFLNILGSDIIENAVEFILRSMTRSTEFLEHGDKQGEHSSK.

Residues 1 to 23 form the signal peptide; it reads MAVSGLRLTIVWGLLVLILTCQA. Positions 25 to 40 are enriched in basic and acidic residues; that stretch reads DKPEGKPDEQPHDSGK. A disordered region spans residues 25 to 45; that stretch reads DKPEGKPDEQPHDSGKNSEPA.

The protein resides in the secreted. This is an uncharacterized protein from Bos taurus (Bovine).